We begin with the raw amino-acid sequence, 191 residues long: Thymidine kinase (191 aa).

ATP contacts are provided by residues 15–22 and 88–91; these read GSMFSGKS and DEVQ. Catalysis depends on Glu-89, which acts as the Proton acceptor. Cys-145, Cys-148, Cys-183, and His-186 together coordinate Zn(2+).

This sequence belongs to the thymidine kinase family. In terms of assembly, homotetramer.

It is found in the cytoplasm. It carries out the reaction thymidine + ATP = dTMP + ADP + H(+). In Macrococcus caseolyticus (strain JCSC5402) (Macrococcoides caseolyticum), this protein is Thymidine kinase.